A 337-amino-acid polypeptide reads, in one-letter code: ATP-dependent 6-phosphofructokinase (337 aa).

ATP is bound at residue Gly11. 21-25 (RAVVR) is a binding site for ADP. ATP is bound by residues 72–73 (RY) and 102–105 (GDGS). Residue Asp103 coordinates Mg(2+). 125 to 127 (TID) contributes to the substrate binding site. Asp127 functions as the Proton acceptor in the catalytic mechanism. Arg154 lines the ADP pocket. Substrate is bound by residues Arg162 and 169-171 (MGR). ADP-binding positions include 185-187 (GAD), Lys212, and 214-216 (KNH). Substrate-binding positions include Glu223, Arg245, and 251–254 (HILR).

This sequence belongs to the phosphofructokinase type A (PFKA) family. ATP-dependent PFK group I subfamily. Prokaryotic clade 'B1' sub-subfamily. In terms of assembly, homotetramer. Mg(2+) is required as a cofactor.

The protein resides in the cytoplasm. The catalysed reaction is beta-D-fructose 6-phosphate + ATP = beta-D-fructose 1,6-bisphosphate + ADP + H(+). The protein operates within carbohydrate degradation; glycolysis; D-glyceraldehyde 3-phosphate and glycerone phosphate from D-glucose: step 3/4. With respect to regulation, allosterically activated by ADP and other diphosphonucleosides, and allosterically inhibited by phosphoenolpyruvate. In terms of biological role, catalyzes the phosphorylation of D-fructose 6-phosphate to fructose 1,6-bisphosphate by ATP, the first committing step of glycolysis. This Streptococcus pyogenes serotype M1 protein is ATP-dependent 6-phosphofructokinase.